Reading from the N-terminus, the 156-residue chain is Protein CURVATURE THYLAKOID 1C, chloroplastic (156 aa).

A chloroplast-targeting transit peptide spans 1 to 55; it reads MASISATLPSPLLLTQRKSNLTSIQKLPFSLTRGTNDLSPLSLTRNPSSISLMVK. Residues 56-83 are Stromal-facing; that stretch reads ASGESSDSSTDLDVVSTIQNVWDKSEDR. A helical membrane pass occupies residues 84–104; sequence LGLIGLGFAGIVALWASLNLI. Over 105-109 the chain is Lumenal; the sequence is TAIDK. A helical membrane pass occupies residues 110 to 130; that stretch reads LPVISSGFELVGILFSTWFTY. Residues 131–156 lie on the Stromal side of the membrane; that stretch reads RYLLFKPDRQELSKIVKKSVADILGQ.

This sequence belongs to the CURT family. As to quaternary structure, homo- and heterodimers and trimers. Interacts with PSAD2.

The protein localises to the plastid. It localises to the chloroplast thylakoid membrane. In terms of biological role, determines thylakoid architecture by inducing membrane curvature. This is Protein CURVATURE THYLAKOID 1C, chloroplastic (CURT1C) from Arabidopsis thaliana (Mouse-ear cress).